Consider the following 405-residue polypeptide: Peroxisome biogenesis factor 3 (405 aa).

Topologically, residues 1-26 (MENFQFEDLSPNKVSKVYQDLKKFGS) are cytoplasmic. A helical transmembrane segment spans residues 27 to 49 (FLYNHKMGVFLVSFSSGVAYLYH). Residues 50–124 (NITQSHKRKQ…EKLKLTDQLK (75 aa)) lie on the Peroxisomal side of the membrane. Residues 125–144 (VSIITKLFSVLYIIPMVTIF) form a helical membrane-spanning segment. Over 145–405 (NRLQINLIGK…NDLDFNKVQF (261 aa)) the chain is Cytoplasmic.

The protein belongs to the peroxin-3 family.

The protein localises to the peroxisome membrane. Its function is as follows. Involved in peroxisome biosynthesis. The protein is Peroxisome biogenesis factor 3 (pex3) of Dictyostelium discoideum (Social amoeba).